Reading from the N-terminus, the 649-residue chain is Lipolysis-stimulated lipoprotein receptor (649 aa).

Over residues 1 to 16 the composition is skewed to gly residues; it reads MQQDGLGVGTRNGSGK. The disordered stretch occupies residues 1–21; it reads MQQDGLGVGTRNGSGKGRSVH. Over 1 to 259 the chain is Extracellular; sequence MQQDGLGVGT…PGFQAGPIED (259 aa). In terms of domain architecture, Ig-like V-type spans 86 to 234; it reads PARAIQVTVS…DLQGNNEAYA (149 aa). Cysteines 111 and 218 form a disulfide. The helical transmembrane segment at 260-280 threads the bilayer; sequence WLFVVVVCLAAFLIFLLLGIC. The Cytoplasmic portion of the chain corresponds to 281 to 649; sequence WCQCCPHTCC…LALSRESLVV (369 aa). The residue at position 336 (Thr-336) is a Phosphothreonine. 5 positions are modified to phosphoserine: Ser-365, Ser-371, Ser-389, Ser-432, and Ser-436. The interval 414–649 is disordered; that stretch reads NFDPSRPGPP…LALSRESLVV (236 aa). The span at 426–444 shows a compositional bias: basic and acidic residues; it reads RVERAMSEVTSLHEDDWRS. The residue at position 453 (Thr-453) is a Phosphothreonine. Phosphoserine is present on residues Ser-464, Ser-467, and Ser-493. Thr-501 is modified (phosphothreonine). Over residues 502-518 the composition is skewed to polar residues; the sequence is PPSTAESGSRSPTSNGG. Ser-528 and Ser-530 each carry phosphoserine. The segment covering 529-565 has biased composition (basic and acidic residues); sequence RSRDDLYDQDDSRDFPRSRDPHYDDFRSRERPPADPR. A Phosphotyrosine modification is found at Tyr-535. Ser-540 and Ser-579 each carry phosphoserine. The span at 589–609 shows a compositional bias: basic and acidic residues; that stretch reads RLLEEAVRKKGSEERRRPHKE. Ser-631 is modified (phosphoserine). Lys-638 participates in a covalent cross-link: Glycyl lysine isopeptide (Lys-Gly) (interchain with G-Cter in ubiquitin). Phosphoserine occurs at positions 643 and 646.

It belongs to the immunoglobulin superfamily. LISCH7 family. Homotrimer or homotetramer. Assembles into cell-cell contacts. Interacts (via the cytoplasmic domain) with MARVELD2 (via C-terminal cytoplasmic domain); the interaction is required to recruit MARVELD2 to tricellular contacts. Interacts with OCLN. In terms of processing, phosphorylation at Ser-365 by MAPK8/JNK1 and MAPK9/JNK2 may be required for exclusive localization at tricellular tight junstions. Polyubiquitinated at Lys-638 via 'Lys-63'-linked ubiquitin chains; deubiquitinated by USP53.

It is found in the cell membrane. It localises to the cell junction. The protein resides in the tight junction. Functionally, probable role in the clearance of triglyceride-rich lipoprotein from blood. Binds chylomicrons, LDL and VLDL in presence of free fatty acids and allows their subsequent uptake in the cells. Maintains epithelial barrier function by recruiting MARVELD2/tricellulin to tricellular tight junctions. The chain is Lipolysis-stimulated lipoprotein receptor from Homo sapiens (Human).